A 67-amino-acid polypeptide reads, in one-letter code: Large ribosomal subunit protein uL29 (67 aa).

The protein belongs to the universal ribosomal protein uL29 family.

The protein is Large ribosomal subunit protein uL29 of Sorangium cellulosum (strain So ce56) (Polyangium cellulosum (strain So ce56)).